The following is a 202-amino-acid chain: Cytochrome c oxidase assembly protein CtaG (202 aa).

Over 1–14 (MTSPANPSEVTRDR) the chain is Cytoplasmic. The helical; Signal-anchor for type II membrane protein transmembrane segment at 15 to 37 (RNRGVAFVCAGVFVAMVGMSFAA) threads the bilayer. At 38 to 202 (VPLYRLFCQV…GAAKTQKLGG (165 aa)) the chain is on the periplasmic side.

It belongs to the COX11/CtaG family.

It is found in the cell inner membrane. Functionally, exerts its effect at some terminal stage of cytochrome c oxidase synthesis, probably by being involved in the insertion of the copper B into subunit I. In Chelativorans sp. (strain BNC1), this protein is Cytochrome c oxidase assembly protein CtaG.